Here is a 700-residue protein sequence, read N- to C-terminus: Elongation factor G (700 aa).

Positions 8–290 (ERYRNIGISA…AVIDYLPAPT (283 aa)) constitute a tr-type G domain. Residues 17-24 (AHIDAGKT), 88-92 (DTPGH), and 142-145 (NKMD) contribute to the GTP site.

It belongs to the TRAFAC class translation factor GTPase superfamily. Classic translation factor GTPase family. EF-G/EF-2 subfamily.

The protein resides in the cytoplasm. In terms of biological role, catalyzes the GTP-dependent ribosomal translocation step during translation elongation. During this step, the ribosome changes from the pre-translocational (PRE) to the post-translocational (POST) state as the newly formed A-site-bound peptidyl-tRNA and P-site-bound deacylated tRNA move to the P and E sites, respectively. Catalyzes the coordinated movement of the two tRNA molecules, the mRNA and conformational changes in the ribosome. The sequence is that of Elongation factor G from Glaesserella parasuis serovar 5 (strain SH0165) (Haemophilus parasuis).